A 146-amino-acid polypeptide reads, in one-letter code: Hemoglobin subunit beta (146 aa).

Residues 2-146 (HWSAEEKQLI…VAHALARKYH (145 aa)) form the Globin domain. His63 and His92 together coordinate heme b.

This sequence belongs to the globin family. Heterotetramer of two alpha chains and two beta chains. In terms of tissue distribution, red blood cells.

Functionally, involved in oxygen transport from the lung to the various peripheral tissues. This is Hemoglobin subunit beta (HBB) from Streptopelia orientalis (Eastern turtle dove).